The sequence spans 368 residues: Anhydro-N-acetylmuramic acid kinase (368 aa).

13–20 (GTSLDGVD) contacts ATP.

It belongs to the anhydro-N-acetylmuramic acid kinase family.

The catalysed reaction is 1,6-anhydro-N-acetyl-beta-muramate + ATP + H2O = N-acetyl-D-muramate 6-phosphate + ADP + H(+). The protein operates within amino-sugar metabolism; 1,6-anhydro-N-acetylmuramate degradation. It functions in the pathway cell wall biogenesis; peptidoglycan recycling. Catalyzes the specific phosphorylation of 1,6-anhydro-N-acetylmuramic acid (anhMurNAc) with the simultaneous cleavage of the 1,6-anhydro ring, generating MurNAc-6-P. Is required for the utilization of anhMurNAc either imported from the medium or derived from its own cell wall murein, and thus plays a role in cell wall recycling. This is Anhydro-N-acetylmuramic acid kinase from Hahella chejuensis (strain KCTC 2396).